A 317-amino-acid polypeptide reads, in one-letter code: Aspartate carbamoyltransferase catalytic subunit (317 aa).

Residues R66 and T67 each coordinate carbamoyl phosphate. An L-aspartate-binding site is contributed by K94. Residues R116, H144, and Q147 each contribute to the carbamoyl phosphate site. Positions 177 and 231 each coordinate L-aspartate. Carbamoyl phosphate is bound by residues G272 and P273.

This sequence belongs to the aspartate/ornithine carbamoyltransferase superfamily. ATCase family. In terms of assembly, heterododecamer (2C3:3R2) of six catalytic PyrB chains organized as two trimers (C3), and six regulatory PyrI chains organized as three dimers (R2).

It catalyses the reaction carbamoyl phosphate + L-aspartate = N-carbamoyl-L-aspartate + phosphate + H(+). Its pathway is pyrimidine metabolism; UMP biosynthesis via de novo pathway; (S)-dihydroorotate from bicarbonate: step 2/3. Functionally, catalyzes the condensation of carbamoyl phosphate and aspartate to form carbamoyl aspartate and inorganic phosphate, the committed step in the de novo pyrimidine nucleotide biosynthesis pathway. The sequence is that of Aspartate carbamoyltransferase catalytic subunit from Bradyrhizobium sp. (strain BTAi1 / ATCC BAA-1182).